Here is a 345-residue protein sequence, read N- to C-terminus: Protein RecA (345 aa).

An ATP-binding site is contributed by 63-70 (GPESSGKT). Residues 326–345 (VLSDALMTDPEPDADGTPED) are disordered. A compositionally biased stretch (acidic residues) spans 335-345 (PEPDADGTPED).

It belongs to the RecA family.

Its subcellular location is the cytoplasm. In terms of biological role, can catalyze the hydrolysis of ATP in the presence of single-stranded DNA, the ATP-dependent uptake of single-stranded DNA by duplex DNA, and the ATP-dependent hybridization of homologous single-stranded DNAs. It interacts with LexA causing its activation and leading to its autocatalytic cleavage. This is Protein RecA from Gluconobacter oxydans (strain 621H) (Gluconobacter suboxydans).